Consider the following 319-residue polypeptide: Ribonucleoside-diphosphate reductase small chain (319 aa).

3 residues coordinate Fe cation: aspartate 70, glutamate 101, and histidine 104. The active site involves tyrosine 108. 3 residues coordinate Fe cation: glutamate 163, glutamate 197, and histidine 200. The segment at 313-319 is interaction with R1; that stretch reads FSLDVDF.

Belongs to the ribonucleoside diphosphate reductase small chain family. As to quaternary structure, interacts with RNR1/OPG080 subunit. Can interact with host RNR1 supunit. It depends on Fe cation as a cofactor.

The enzyme catalyses a 2'-deoxyribonucleoside 5'-diphosphate + [thioredoxin]-disulfide + H2O = a ribonucleoside 5'-diphosphate + [thioredoxin]-dithiol. Functionally, ribonucleoside-diphosphate reductase holoenzyme provides the precursors necessary for viral DNA synthesis. Allows virus growth in non-dividing cells. Catalyzes the biosynthesis of deoxyribonucleotides from the corresponding ribonucleotides. The sequence is that of Ribonucleoside-diphosphate reductase small chain (OPG048) from Bos taurus (Bovine).